The sequence spans 82 residues: Histidine-rich protein (82 aa).

The chain is Histidine-rich protein from Plasmodium falciparum (isolate fcm17 / Senegal).